The sequence spans 238 residues: Ribonuclease PH (238 aa).

Residues Arg-86 and 124–126 (GTR) each bind phosphate.

It belongs to the RNase PH family. Homohexameric ring arranged as a trimer of dimers.

The enzyme catalyses tRNA(n+1) + phosphate = tRNA(n) + a ribonucleoside 5'-diphosphate. Phosphorolytic 3'-5' exoribonuclease that plays an important role in tRNA 3'-end maturation. Removes nucleotide residues following the 3'-CCA terminus of tRNAs; can also add nucleotides to the ends of RNA molecules by using nucleoside diphosphates as substrates, but this may not be physiologically important. Probably plays a role in initiation of 16S rRNA degradation (leading to ribosome degradation) during starvation. In Haemophilus influenzae (strain PittGG), this protein is Ribonuclease PH.